A 329-amino-acid polypeptide reads, in one-letter code: Beta-ketoacyl-[acyl-carrier-protein] synthase III (329 aa).

Residues Cys-123 and His-256 contribute to the active site. An ACP-binding region spans residues 257–261 (QANIR). The active site involves Asn-286.

The protein belongs to the thiolase-like superfamily. FabH family. In terms of assembly, homodimer.

It localises to the cytoplasm. It catalyses the reaction malonyl-[ACP] + acetyl-CoA + H(+) = 3-oxobutanoyl-[ACP] + CO2 + CoA. It participates in lipid metabolism; fatty acid biosynthesis. Its function is as follows. Catalyzes the condensation reaction of fatty acid synthesis by the addition to an acyl acceptor of two carbons from malonyl-ACP. Catalyzes the first condensation reaction which initiates fatty acid synthesis and may therefore play a role in governing the total rate of fatty acid production. Possesses both acetoacetyl-ACP synthase and acetyl transacylase activities. Its substrate specificity determines the biosynthesis of branched-chain and/or straight-chain of fatty acids. The protein is Beta-ketoacyl-[acyl-carrier-protein] synthase III of Burkholderia lata (strain ATCC 17760 / DSM 23089 / LMG 22485 / NCIMB 9086 / R18194 / 383).